A 64-amino-acid chain; its full sequence is MASKKGVRLIITLECTECRTNTNKRSPGVNRYTTSKNRRNTTGRIELKKFCPHCNTHTVHKEIK.

Belongs to the bacterial ribosomal protein bL33 family.

This Crocosphaera subtropica (strain ATCC 51142 / BH68) (Cyanothece sp. (strain ATCC 51142)) protein is Large ribosomal subunit protein bL33.